We begin with the raw amino-acid sequence, 315 residues long: Putative methyltransferase SPBC8D2.16c (315 aa).

The protein belongs to the class IV-like SAM-binding methyltransferase superfamily.

It localises to the cytoplasm. It is found in the nucleus. The protein is Putative methyltransferase SPBC8D2.16c of Schizosaccharomyces pombe (strain 972 / ATCC 24843) (Fission yeast).